We begin with the raw amino-acid sequence, 48 residues long: Phospholipase A2 TI-Nh (48 aa).

H25 is a catalytic residue. D26 is a binding site for Ca(2+).

The protein belongs to the phospholipase A2 family. Group I subfamily. D49 sub-subfamily. In terms of assembly, monomer. Ca(2+) is required as a cofactor. Expressed by the venom gland.

Its subcellular location is the secreted. The enzyme catalyses a 1,2-diacyl-sn-glycero-3-phosphocholine + H2O = a 1-acyl-sn-glycero-3-phosphocholine + a fatty acid + H(+). Phospholipase A2 with weak enzymatic activity, which partially inhibits thrombin enzymatic activity (Ki=73 nM), completely inhibits thrombin-induced platelet aggregation and retards fibrin clot formation (IC(50)=0.2 nM). May exert this anticoagulant effect through a non-enzymatic mechanism. This is Phospholipase A2 TI-Nh from Naja haje haje (Egyptian cobra).